A 246-amino-acid chain; its full sequence is UDP-2,3-diacylglucosamine hydrolase (246 aa).

5 residues coordinate Mn(2+): D8, H10, D41, N79, and H114. 79-80 (NR) provides a ligand contact to substrate. Substrate contacts are provided by D122, S160, K164, K167, and H195. Mn(2+) contacts are provided by H195 and H197.

The protein belongs to the LpxH family. Requires Mn(2+) as cofactor.

Its subcellular location is the cell inner membrane. It carries out the reaction UDP-2-N,3-O-bis[(3R)-3-hydroxytetradecanoyl]-alpha-D-glucosamine + H2O = 2-N,3-O-bis[(3R)-3-hydroxytetradecanoyl]-alpha-D-glucosaminyl 1-phosphate + UMP + 2 H(+). It functions in the pathway glycolipid biosynthesis; lipid IV(A) biosynthesis; lipid IV(A) from (3R)-3-hydroxytetradecanoyl-[acyl-carrier-protein] and UDP-N-acetyl-alpha-D-glucosamine: step 4/6. In terms of biological role, hydrolyzes the pyrophosphate bond of UDP-2,3-diacylglucosamine to yield 2,3-diacylglucosamine 1-phosphate (lipid X) and UMP by catalyzing the attack of water at the alpha-P atom. Involved in the biosynthesis of lipid A, a phosphorylated glycolipid that anchors the lipopolysaccharide to the outer membrane of the cell. The chain is UDP-2,3-diacylglucosamine hydrolase from Tolumonas auensis (strain DSM 9187 / NBRC 110442 / TA 4).